A 339-amino-acid polypeptide reads, in one-letter code: DNA-directed RNA polymerase subunit alpha (339 aa).

Residues 1–235 are alpha N-terminal domain (alpha-NTD); that stretch reads MVIQKNWQEL…DQLQVFVNFE (235 aa). The tract at residues 251 to 339 is alpha C-terminal domain (alpha-CTD); it reads FNPALLKKVD…DLAKRFEEHY (89 aa).

The protein belongs to the RNA polymerase alpha chain family. In terms of assembly, homodimer. The RNAP catalytic core consists of 2 alpha, 1 beta, 1 beta' and 1 omega subunit. When a sigma factor is associated with the core the holoenzyme is formed, which can initiate transcription.

It catalyses the reaction RNA(n) + a ribonucleoside 5'-triphosphate = RNA(n+1) + diphosphate. Its function is as follows. DNA-dependent RNA polymerase catalyzes the transcription of DNA into RNA using the four ribonucleoside triphosphates as substrates. This is DNA-directed RNA polymerase subunit alpha from Methylorubrum populi (strain ATCC BAA-705 / NCIMB 13946 / BJ001) (Methylobacterium populi).